A 91-amino-acid polypeptide reads, in one-letter code: DIDCKTVDSALSPCIPYLLGGGTPTTDCCKGVSAIKDMSTTTDNKRNACKCVKTAAARYPSLKDEVAQALPDKCQVKLDIPISRNTNCDAI.

4 cysteine pairs are disulfide-bonded: C4/C51, C14/C28, C29/C74, and C49/C88.

Belongs to the plant LTP family. As to expression, detected in seeds (at protein level).

In terms of biological role, plant non-specific lipid-transfer proteins transfer phospholipids as well as galactolipids across membranes. May play a role in wax or cutin deposition in the cell walls of expanding epidermal cells and certain secretory tissues. The chain is Non-specific lipid-transfer protein 1 from Carum carvi (Caraway).